Here is a 469-residue protein sequence, read N- to C-terminus: Ribulose bisphosphate carboxylase large chain (469 aa).

K7 bears the N6,N6,N6-trimethyllysine mark. N116 and T166 together coordinate substrate. The Proton acceptor role is filled by K168. A substrate-binding site is contributed by K170. Residues K194, D196, and E197 each contribute to the Mg(2+) site. K194 bears the N6-carboxylysine mark. Catalysis depends on H287, which acts as the Proton acceptor. Substrate-binding residues include R288, H320, and S372.

The protein belongs to the RuBisCO large chain family. Type I subfamily. Heterohexadecamer of 8 large chains and 8 small chains; disulfide-linked. The disulfide link is formed within the large subunit homodimers. Mg(2+) is required as a cofactor. The disulfide bond which can form in the large chain dimeric partners within the hexadecamer appears to be associated with oxidative stress and protein turnover.

Its subcellular location is the plastid. The protein localises to the chloroplast. It catalyses the reaction 2 (2R)-3-phosphoglycerate + 2 H(+) = D-ribulose 1,5-bisphosphate + CO2 + H2O. The enzyme catalyses D-ribulose 1,5-bisphosphate + O2 = 2-phosphoglycolate + (2R)-3-phosphoglycerate + 2 H(+). In terms of biological role, ruBisCO catalyzes two reactions: the carboxylation of D-ribulose 1,5-bisphosphate, the primary event in carbon dioxide fixation, as well as the oxidative fragmentation of the pentose substrate in the photorespiration process. Both reactions occur simultaneously and in competition at the same active site. The protein is Ribulose bisphosphate carboxylase large chain of Pachira aquatica (Guiana chestnut).